The sequence spans 141 residues: Protein X (141 aa).

Positions 24–48 (QSSGPPFPRPSAGSAASPASSLSAS) are enriched in low complexity. Residues 24 to 51 (QSSGPPFPRPSAGSAASPASSLSASDES) are disordered. Positions 68–113 (PCCLVVTCAELRTMDSTVNFVSWHANRQLGMPSKDLWTPYIRDQLL) are mitochondrial targeting sequence.

This sequence belongs to the orthohepadnavirus protein X family. As to quaternary structure, may form homodimer. May interact with host CEBPA, CFLAR, CREB1, DDB1, E4F1, HBXIP, HSPD1/HSP60, NFKBIA, POLR2E and SMAD4. Interacts with host SMC5-SMC6 complex and induces its degradation. Interacts with host TRPC4AP; leading to prevent ubiquitination of TRPC4AP. Interacts with host PLSCR1; this interaction promotes ubiquitination and degradation of HBx and impairs HBx-mediated cell proliferation. Post-translationally, a fraction may be phosphorylated in insect cells and HepG2 cells, a human hepatoblastoma cell line. Phosphorylated in vitro by host protein kinase C or mitogen-activated protein kinase. N-acetylated in insect cells.

It is found in the host cytoplasm. Its subcellular location is the host nucleus. The protein resides in the host mitochondrion. Multifunctional protein that plays a role in silencing host antiviral defenses and promoting viral transcription. Does not seem to be essential for HBV infection. May be directly involved in development of cirrhosis and liver cancer (hepatocellular carcinoma). Most of cytosolic activities involve modulation of cytosolic calcium. The effect on apoptosis is controversial depending on the cell types in which the studies have been conducted. May induce apoptosis by localizing in mitochondria and causing loss of mitochondrial membrane potential. May also modulate apoptosis by binding host CFLAR, a key regulator of the death-inducing signaling complex (DISC). Promotes viral transcription by using the host E3 ubiquitin ligase DDB1 to target the SMC5-SMC6 complex to proteasomal degradation. This host complex would otherwise bind to viral episomal DNA, and prevents its transcription. Moderately stimulates transcription of many different viral and cellular transcription elements. Promoters and enhancers stimulated by HBx contain DNA binding sites for NF-kappa-B, AP-1, AP-2, c-EBP, ATF/CREB, or the calcium-activated factor NF-AT. This is Protein X from Woodchuck hepatitis B virus (isolate 1) (WHV).